Here is a 613-residue protein sequence, read N- to C-terminus: Oxidoreductase GME11365 (613 aa).

Plastocyanin-like domains follow at residues 72 to 188, 198 to 331, and 431 to 571; these read ISEA…HGPS, PLLI…WIHG, and VDWR…EQPS.

The protein belongs to the multicopper oxidase family.

The protein operates within secondary metabolite biosynthesis. In terms of biological role, oxidoreductase; part of the gene cluster that mediates the biosynthesis of dibenzodioxocinones such as pestalotiollide B, a novel class of inhibitors against cholesterol ester transfer protein (CEPT). The biosynthesis initiates from condensation of acetate and malonate units catalyzed by the non-reducing PKS pks8/GME11356. Pks8/GME11356 lacks a thioesterase (TE) domain, which is important to the cyclizing of the third ring of atrochrysone carboxylic acid, and the esterase GME11355 might play the role of TE and catalyzes the cyclization reaction of the C ring. The lactamase-like protein GME11357 (or other beta-lactamases in Pestalotiopsis microspora) probably hydrolyzes the thioester bond between the ACP of pks8/GME11356 and the intermediate to release atrochrysone carboxylic acid, which is spontaneously dehydrates to form endocrocin anthrone. Endocrocin anthrone is further converted to emodin via the endocrocin intermediate. Emodin is then oxidized by several enzymes such as the Baeyer-Villiger oxidase GME11358, the oxidoreductase GME11367, the short chain dehydrogenase/reductase GME11373, as well as by other oxidoreductases from the cluster, to modify the A and C rings and open the B ring, and finally yield monodictyphenone. The prenyltransferase GME11375 may catalyze the addition reaction between the C5 side chains and the carbon bone of dibenzodioxocinones. The remaining biochemical reactions to the final product dibenzodioxocinones should be methylation catalyzed by methyltransferase GME11366 and reduction and lactonization reaction catalyzed by a series of oxidordeuctases. The sequence is that of Oxidoreductase GME11365 from Pestalotiopsis microspora.